Here is a 329-residue protein sequence, read N- to C-terminus: GTP 3',8-cyclase (329 aa).

In terms of domain architecture, Radical SAM core spans 8 to 234; sequence AFARKFYYLR…QIRQRSDGPA (227 aa). A GTP-binding site is contributed by Arg-17. The [4Fe-4S] cluster site is built by Cys-24 and Cys-28. Tyr-30 provides a ligand contact to S-adenosyl-L-methionine. Cys-31 lines the [4Fe-4S] cluster pocket. Position 68 (Arg-68) interacts with GTP. Gly-72 provides a ligand contact to S-adenosyl-L-methionine. Position 99 (Thr-99) interacts with GTP. Residue Ser-123 participates in S-adenosyl-L-methionine binding. Lys-160 provides a ligand contact to GTP. Met-194 is an S-adenosyl-L-methionine binding site. [4Fe-4S] cluster-binding residues include Cys-257 and Cys-260. 262–264 serves as a coordination point for GTP; the sequence is RLR. Cys-274 lines the [4Fe-4S] cluster pocket.

It belongs to the radical SAM superfamily. MoaA family. Monomer and homodimer. Requires [4Fe-4S] cluster as cofactor.

The catalysed reaction is GTP + AH2 + S-adenosyl-L-methionine = (8S)-3',8-cyclo-7,8-dihydroguanosine 5'-triphosphate + 5'-deoxyadenosine + L-methionine + A + H(+). Its pathway is cofactor biosynthesis; molybdopterin biosynthesis. In terms of biological role, catalyzes the cyclization of GTP to (8S)-3',8-cyclo-7,8-dihydroguanosine 5'-triphosphate. This chain is GTP 3',8-cyclase, found in Klebsiella pneumoniae subsp. pneumoniae (strain ATCC 700721 / MGH 78578).